The chain runs to 284 residues: ATP phosphoribosyltransferase (284 aa).

The protein belongs to the ATP phosphoribosyltransferase family. Long subfamily. The cofactor is Mg(2+).

The protein localises to the cytoplasm. It carries out the reaction 1-(5-phospho-beta-D-ribosyl)-ATP + diphosphate = 5-phospho-alpha-D-ribose 1-diphosphate + ATP. The protein operates within amino-acid biosynthesis; L-histidine biosynthesis; L-histidine from 5-phospho-alpha-D-ribose 1-diphosphate: step 1/9. With respect to regulation, feedback inhibited by histidine. Catalyzes the condensation of ATP and 5-phosphoribose 1-diphosphate to form N'-(5'-phosphoribosyl)-ATP (PR-ATP). Has a crucial role in the pathway because the rate of histidine biosynthesis seems to be controlled primarily by regulation of HisG enzymatic activity. This chain is ATP phosphoribosyltransferase, found in Methanococcoides burtonii (strain DSM 6242 / NBRC 107633 / OCM 468 / ACE-M).